Reading from the N-terminus, the 258-residue chain is Granzyme K (258 aa).

The N-terminal stretch at 1-23 (MSFSSSALVFLVAGIYMSSESFH) is a signal peptide. Residues 24 to 25 (TE) constitute a propeptide, activation peptide. Residues 26–253 (IIGGREVQPH…YQTWIKSKLA (228 aa)) enclose the Peptidase S1 domain. The cysteines at positions 51 and 67 are disulfide-linked. Active-site charge relay system residues include His-66 and Asp-110. Cystine bridges form between Cys-143–Cys-214, Cys-175–Cys-193, and Cys-204–Cys-228. Catalysis depends on Ser-208, which acts as the Charge relay system.

It belongs to the peptidase S1 family. Granzyme subfamily. As to expression, speen, lungs and liver non-parenchymal cells.

The protein resides in the cytoplasmic granule. The sequence is that of Granzyme K (Gzmk) from Rattus norvegicus (Rat).